Consider the following 227-residue polypeptide: tRNA (guanine-N(7)-)-methyltransferase (227 aa).

Residues Glu-60, Glu-85, Asp-112, and Asp-135 each contribute to the S-adenosyl-L-methionine site. The active site involves Asp-135. Substrate is bound by residues Lys-139, Asp-171, and 206 to 209 (TKFE).

Belongs to the class I-like SAM-binding methyltransferase superfamily. TrmB family.

The enzyme catalyses guanosine(46) in tRNA + S-adenosyl-L-methionine = N(7)-methylguanosine(46) in tRNA + S-adenosyl-L-homocysteine. The protein operates within tRNA modification; N(7)-methylguanine-tRNA biosynthesis. Functionally, catalyzes the formation of N(7)-methylguanine at position 46 (m7G46) in tRNA. The chain is tRNA (guanine-N(7)-)-methyltransferase from Thiobacillus denitrificans (strain ATCC 25259 / T1).